Consider the following 89-residue polypeptide: Co-chaperonin GroES (89 aa).

Belongs to the GroES chaperonin family. In terms of assembly, heptamer of 7 subunits arranged in a ring. Interacts with the chaperonin GroEL.

The protein resides in the cytoplasm. Its function is as follows. Together with the chaperonin GroEL, plays an essential role in assisting protein folding. The GroEL-GroES system forms a nano-cage that allows encapsulation of the non-native substrate proteins and provides a physical environment optimized to promote and accelerate protein folding. GroES binds to the apical surface of the GroEL ring, thereby capping the opening of the GroEL channel. This is Co-chaperonin GroES from Fervidobacterium nodosum (strain ATCC 35602 / DSM 5306 / Rt17-B1).